The chain runs to 728 residues: 1,4-alpha-glucan branching enzyme GlgB (728 aa).

The Nucleophile role is filled by aspartate 405. Glutamate 458 acts as the Proton donor in catalysis.

It belongs to the glycosyl hydrolase 13 family. GlgB subfamily. Monomer.

The catalysed reaction is Transfers a segment of a (1-&gt;4)-alpha-D-glucan chain to a primary hydroxy group in a similar glucan chain.. It functions in the pathway glycan biosynthesis; glycogen biosynthesis. Catalyzes the formation of the alpha-1,6-glucosidic linkages in glycogen by scission of a 1,4-alpha-linked oligosaccharide from growing alpha-1,4-glucan chains and the subsequent attachment of the oligosaccharide to the alpha-1,6 position. This is 1,4-alpha-glucan branching enzyme GlgB from Shigella dysenteriae serotype 1 (strain Sd197).